Here is a 128-residue protein sequence, read N- to C-terminus: MARRKTTKRKVKKNVPFGIAHIHTTFNNTIVTITDANGNAITWSSAGALGFKGSRKSTPFAAQLAAEAVAKAAMEHGMAKIEVFIAGPGPGREAAVRSLQAAGLEITAIKDVTAVPHNGCRPPKSPRG.

This sequence belongs to the universal ribosomal protein uS11 family. In terms of assembly, part of the 30S ribosomal subunit. Interacts with proteins S7 and S18. Binds to IF-3.

Functionally, located on the platform of the 30S subunit, it bridges several disparate RNA helices of the 16S rRNA. Forms part of the Shine-Dalgarno cleft in the 70S ribosome. The protein is Small ribosomal subunit protein uS11 of Phytoplasma australiense.